A 129-amino-acid polypeptide reads, in one-letter code: Phosphoribosyl-AMP cyclohydrolase (129 aa).

Aspartate 76 provides a ligand contact to Mg(2+). Cysteine 77 lines the Zn(2+) pocket. Mg(2+) contacts are provided by aspartate 78 and aspartate 80. Cysteine 97 and cysteine 104 together coordinate Zn(2+).

Belongs to the PRA-CH family. As to quaternary structure, homodimer. It depends on Mg(2+) as a cofactor. Zn(2+) is required as a cofactor.

Its subcellular location is the cytoplasm. The enzyme catalyses 1-(5-phospho-beta-D-ribosyl)-5'-AMP + H2O = 1-(5-phospho-beta-D-ribosyl)-5-[(5-phospho-beta-D-ribosylamino)methylideneamino]imidazole-4-carboxamide. Its pathway is amino-acid biosynthesis; L-histidine biosynthesis; L-histidine from 5-phospho-alpha-D-ribose 1-diphosphate: step 3/9. Functionally, catalyzes the hydrolysis of the adenine ring of phosphoribosyl-AMP. This is Phosphoribosyl-AMP cyclohydrolase from Verminephrobacter eiseniae (strain EF01-2).